Consider the following 600-residue polypeptide: NADH-quinone oxidoreductase subunit C/D (600 aa).

Residues 1-190 (MVNNMTDLTA…DPFELTKAKQ (190 aa)) are NADH dehydrogenase I subunit C. Residues 214-600 (DFMFLNLGPN…IDFVMSDVDR (387 aa)) form an NADH dehydrogenase I subunit D region.

It in the N-terminal section; belongs to the complex I 30 kDa subunit family. In the C-terminal section; belongs to the complex I 49 kDa subunit family. As to quaternary structure, NDH-1 is composed of 13 different subunits. Subunits NuoB, CD, E, F, and G constitute the peripheral sector of the complex.

Its subcellular location is the cell inner membrane. It catalyses the reaction a quinone + NADH + 5 H(+)(in) = a quinol + NAD(+) + 4 H(+)(out). Its function is as follows. NDH-1 shuttles electrons from NADH, via FMN and iron-sulfur (Fe-S) centers, to quinones in the respiratory chain. The immediate electron acceptor for the enzyme in this species is believed to be ubiquinone. Couples the redox reaction to proton translocation (for every two electrons transferred, four hydrogen ions are translocated across the cytoplasmic membrane), and thus conserves the redox energy in a proton gradient. The protein is NADH-quinone oxidoreductase subunit C/D of Citrobacter koseri (strain ATCC BAA-895 / CDC 4225-83 / SGSC4696).